The sequence spans 345 residues: Phosphoribosylformylglycinamidine cyclo-ligase (345 aa).

The protein belongs to the AIR synthase family.

The protein localises to the cytoplasm. It carries out the reaction 2-formamido-N(1)-(5-O-phospho-beta-D-ribosyl)acetamidine + ATP = 5-amino-1-(5-phospho-beta-D-ribosyl)imidazole + ADP + phosphate + H(+). Its pathway is purine metabolism; IMP biosynthesis via de novo pathway; 5-amino-1-(5-phospho-D-ribosyl)imidazole from N(2)-formyl-N(1)-(5-phospho-D-ribosyl)glycinamide: step 2/2. In Escherichia coli O7:K1 (strain IAI39 / ExPEC), this protein is Phosphoribosylformylglycinamidine cyclo-ligase.